The primary structure comprises 66 residues: Beta-mammal toxin Cv5 (66 aa).

The region spanning 1–66 is the LCN-type CS-alpha/beta domain; that stretch reads KEGYIVNYYD…VWPLPKKKCN (66 aa). Disulfide bonds link cysteine 12/cysteine 65, cysteine 16/cysteine 41, cysteine 25/cysteine 46, and cysteine 29/cysteine 48.

In terms of tissue distribution, expressed by the venom gland.

The protein localises to the secreted. Is susceptible to be neutralized by human antibodies scFvs 10FG2 and HV. In terms of biological role, beta toxins bind voltage-independently at site-4 of sodium channels (Nav) and reduces peak current and shifts the voltage of activation toward more negative potentials thereby affecting sodium channel activation and promoting spontaneous and repetitive firing. This toxin is moderately toxic to mice. This is Beta-mammal toxin Cv5 from Centruroides villegasi (Scorpion).